A 182-amino-acid polypeptide reads, in one-letter code: Large ribosomal subunit protein uL16 (182 aa).

Belongs to the universal ribosomal protein uL16 family.

This Thermococcus gammatolerans (strain DSM 15229 / JCM 11827 / EJ3) protein is Large ribosomal subunit protein uL16.